The following is a 217-amino-acid chain: Melanocortin-2 receptor accessory protein 2A (217 aa).

A glycan (N-linked (GlcNAc...) asparagine) is linked at Asn-8. A helical membrane pass occupies residues Ile-42–Thr-62.

It belongs to the MRAP family. As to quaternary structure, interacts with mc4r.

Its subcellular location is the cell membrane. The protein localises to the endoplasmic reticulum membrane. Functionally, inhibitor of melanocortin receptor 4 (mc4r), a receptor involved in energy homeostasis. Plays a role during larval development in the control of energy homeostasis and body weight regulation by decreasing ligand-sensitivity of mc4r and mc4r-mediated generation of cAMP, leading to stimulate growth during larval development. Acts by stabilizing an inactive conformation of mc4r during embryonic development, when all the energy consumed is obtained from the yolk sac, possibly to speed the rapid maturation to the mobile free-feeding juvenile stage reached at 5 dpf. This Danio rerio (Zebrafish) protein is Melanocortin-2 receptor accessory protein 2A (mrap2a).